Reading from the N-terminus, the 562-residue chain is Valerena-4,7(11)-diene synthase (562 aa).

Residues aspartate 314, aspartate 318, and glutamate 467 each coordinate Mg(2+). A DDXXD motif motif is present at residues 314-318 (DDTYD).

Belongs to the terpene synthase family. It depends on Mg(2+) as a cofactor. Predominantly expressed in root.

It catalyses the reaction (2E,6E)-farnesyl diphosphate = valerena-4,7(11)-diene + diphosphate. Catalyzes formation of valerena-4,7(11)-diene, one of the active ingredients responsible for the sedative effect extracted from Valeriana officinalis root. The chain is Valerena-4,7(11)-diene synthase (TPS2) from Valeriana officinalis (Valerian).